The following is a 74-amino-acid chain: MARITVEDCLEKINNRFLIVQMAIKRVHQYREGYDPLVECKNKEVVTALREIAAGEVMPADSIEEAGVFLPATK.

It belongs to the RNA polymerase subunit omega family. In terms of assembly, the RNAP catalytic core consists of 2 alpha, 1 beta, 1 beta' and 1 omega subunit. When a sigma factor is associated with the core the holoenzyme is formed, which can initiate transcription.

The catalysed reaction is RNA(n) + a ribonucleoside 5'-triphosphate = RNA(n+1) + diphosphate. Functionally, promotes RNA polymerase assembly. Latches the N- and C-terminal regions of the beta' subunit thereby facilitating its interaction with the beta and alpha subunits. This chain is DNA-directed RNA polymerase subunit omega, found in Solidesulfovibrio magneticus (strain ATCC 700980 / DSM 13731 / RS-1) (Desulfovibrio magneticus).